A 303-amino-acid chain; its full sequence is Haloalkane dehalogenase (303 aa).

The 145-residue stretch at 48–192 folds into the AB hydrolase-1 domain; the sequence is PVLLLHGEPS…GTVTKLSQAV (145 aa). Residue Asp-123 is the Nucleophile of the active site. Asp-250 (proton donor) is an active-site residue. The Proton acceptor role is filled by His-280.

Belongs to the haloalkane dehalogenase family. Type 1 subfamily. As to quaternary structure, monomer.

It catalyses the reaction 1-haloalkane + H2O = a halide anion + a primary alcohol + H(+). Its function is as follows. Catalyzes hydrolytic cleavage of carbon-halogen bonds in halogenated aliphatic compounds, leading to the formation of the corresponding primary alcohols, halide ions and protons. The sequence is that of Haloalkane dehalogenase from Psychrobacter cryohalolentis (strain ATCC BAA-1226 / DSM 17306 / VKM B-2378 / K5).